Consider the following 197-residue polypeptide: MAKLYFRYSAMDAGKTLDLLKVAYNYEDRGRKPLVLTSAIDKRAGLNKVKSRIGINQDAYSLTDRDNIFEFVENYNSSNKIDCVLIDEIHFFTQEQVWQLAEIVDELNIPVICYGLRTNYLGQPFETAALLLAIADTLEEVKTICHCGKKASFNMMVQNGKAIKQGNPIVVDDDSLKEIDTKYVSVCRKHWKEGVYE.

Residues 9-16 (SAMDAGKT) and 87-90 (DEIH) contribute to the ATP site. Glutamate 88 serves as the catalytic Proton acceptor. Residues cysteine 145, cysteine 147, cysteine 187, and histidine 190 each coordinate Zn(2+).

The protein belongs to the thymidine kinase family. As to quaternary structure, homotetramer.

Its subcellular location is the cytoplasm. The enzyme catalyses thymidine + ATP = dTMP + ADP + H(+). This chain is Thymidine kinase, found in Francisella tularensis subsp. tularensis (strain SCHU S4 / Schu 4).